The sequence spans 550 residues: Leucine-rich repeat LGI family member 2 (550 aa).

An N-terminal signal peptide occupies residues Met1–Ala25. In terms of domain architecture, LRRNT spans Gln26 to Ser62. N-linked (GlcNAc...) asparagine glycosylation is present at Asn67. LRR repeat units lie at residues Ser83–Gly104 and His107–Gly128. Positions Asn140 to Thr190 constitute an LRRCT domain. Asn159 carries an N-linked (GlcNAc...) asparagine glycan. 7 EAR repeats span residues Asp224–His266, Asn270–Glu312, Lys316–Ser363, Gly365–Lys408, Lys412–Ser455, Gln457–Lys499, and Gln503–Ile545. N-linked (GlcNAc...) asparagine glycosylation is present at Asn276. Asn407 carries N-linked (GlcNAc...) asparagine glycosylation.

As to expression, brain.

The protein resides in the secreted. Required for the development of soma-targeting inhibitory GABAergic synapses made by parvalbumin-positive basket cells. The chain is Leucine-rich repeat LGI family member 2 (Lgi2) from Mus musculus (Mouse).